The chain runs to 244 residues: tRNA (guanine-N(7)-)-methyltransferase (244 aa).

Positions 1 to 24 (MTDSHVPHPESPAVEEGEERPHRR) are disordered. The S-adenosyl-L-methionine site is built by Glu74, Glu99, Asp126, and Asp149. Asp149 is a catalytic residue. Residues Lys153, Asp185, and 222–225 (TKFE) contribute to the substrate site.

Belongs to the class I-like SAM-binding methyltransferase superfamily. TrmB family.

It catalyses the reaction guanosine(46) in tRNA + S-adenosyl-L-methionine = N(7)-methylguanosine(46) in tRNA + S-adenosyl-L-homocysteine. Its pathway is tRNA modification; N(7)-methylguanine-tRNA biosynthesis. Functionally, catalyzes the formation of N(7)-methylguanine at position 46 (m7G46) in tRNA. The sequence is that of tRNA (guanine-N(7)-)-methyltransferase from Pseudomonas savastanoi pv. phaseolicola (strain 1448A / Race 6) (Pseudomonas syringae pv. phaseolicola (strain 1448A / Race 6)).